The primary structure comprises 262 residues: Homeobox-leucine zipper protein HOX24 (262 aa).

2 disordered regions span residues 44 to 68 (AAGR…RKRR) and 162 to 189 (LNER…NSVM). Gly residues predominate over residues 46-62 (GRGGGDGDGGGGGGGGG). The homeobox DNA-binding region spans 61-122 (GGGERKRRFT…NKRARWRSKQ (62 aa)). A leucine-zipper region spans residues 121–165 (KQIEHDYAALRAQYDALHARVESLRQEKLALAAQVDELRGKLNER).

It belongs to the HD-ZIP homeobox family. Class I subfamily. In terms of tissue distribution, expressed in roots and panicles.

It is found in the nucleus. Its function is as follows. Probable transcription factor. The protein is Homeobox-leucine zipper protein HOX24 (HOX24) of Oryza sativa subsp. indica (Rice).